A 143-amino-acid chain; its full sequence is Nucleoside diphosphate kinase (143 aa).

Positions 11, 59, 87, 93, 104, and 114 each coordinate ATP. His-117 (pros-phosphohistidine intermediate) is an active-site residue.

The protein belongs to the NDK family. As to quaternary structure, homotetramer. Mg(2+) serves as cofactor.

Its subcellular location is the cytoplasm. It carries out the reaction a 2'-deoxyribonucleoside 5'-diphosphate + ATP = a 2'-deoxyribonucleoside 5'-triphosphate + ADP. It catalyses the reaction a ribonucleoside 5'-diphosphate + ATP = a ribonucleoside 5'-triphosphate + ADP. In terms of biological role, major role in the synthesis of nucleoside triphosphates other than ATP. The ATP gamma phosphate is transferred to the NDP beta phosphate via a ping-pong mechanism, using a phosphorylated active-site intermediate. This is Nucleoside diphosphate kinase from Shewanella denitrificans (strain OS217 / ATCC BAA-1090 / DSM 15013).